A 405-amino-acid polypeptide reads, in one-letter code: L-carnitine CoA-transferase (405 aa).

CoA contacts are provided by lysine 97 and arginine 104. Aspartate 169 (nucleophile) is an active-site residue.

This sequence belongs to the CoA-transferase III family. CaiB subfamily. As to quaternary structure, homodimer.

The protein localises to the cytoplasm. It catalyses the reaction crotonobetainyl-CoA + (R)-carnitine = crotonobetaine + (R)-carnitinyl-CoA. It carries out the reaction 4-(trimethylamino)butanoyl-CoA + (R)-carnitine = (R)-carnitinyl-CoA + 4-(trimethylamino)butanoate. Its pathway is amine and polyamine metabolism; carnitine metabolism. Its function is as follows. Catalyzes the reversible transfer of the CoA moiety from gamma-butyrobetainyl-CoA to L-carnitine to generate L-carnitinyl-CoA and gamma-butyrobetaine. Is also able to catalyze the reversible transfer of the CoA moiety from gamma-butyrobetainyl-CoA or L-carnitinyl-CoA to crotonobetaine to generate crotonobetainyl-CoA. The sequence is that of L-carnitine CoA-transferase from Escherichia coli O127:H6 (strain E2348/69 / EPEC).